We begin with the raw amino-acid sequence, 109 residues long: Large ribosomal subunit protein uL23 (109 aa).

Belongs to the universal ribosomal protein uL23 family. As to quaternary structure, part of the 50S ribosomal subunit. Contacts protein L29, and trigger factor when it is bound to the ribosome.

In terms of biological role, one of the early assembly proteins it binds 23S rRNA. One of the proteins that surrounds the polypeptide exit tunnel on the outside of the ribosome. Forms the main docking site for trigger factor binding to the ribosome. The protein is Large ribosomal subunit protein uL23 of Prosthecochloris aestuarii (strain DSM 271 / SK 413).